The following is a 162-amino-acid chain: Phosphopantetheine adenylyltransferase (162 aa).

A substrate-binding site is contributed by threonine 10. ATP-binding positions include 10 to 11 (TF) and histidine 18. Substrate is bound by residues lysine 42, leucine 74, and arginine 88. ATP contacts are provided by residues 89-91 (GLR), glutamate 99, and 124-130 (YAFLSSS).

Belongs to the bacterial CoaD family. As to quaternary structure, homohexamer. Mg(2+) is required as a cofactor.

It is found in the cytoplasm. The enzyme catalyses (R)-4'-phosphopantetheine + ATP + H(+) = 3'-dephospho-CoA + diphosphate. Its pathway is cofactor biosynthesis; coenzyme A biosynthesis; CoA from (R)-pantothenate: step 4/5. Reversibly transfers an adenylyl group from ATP to 4'-phosphopantetheine, yielding dephospho-CoA (dPCoA) and pyrophosphate. This chain is Phosphopantetheine adenylyltransferase, found in Methylococcus capsulatus (strain ATCC 33009 / NCIMB 11132 / Bath).